The sequence spans 519 residues: ATP synthase subunit alpha (519 aa).

174-181 (GDRQTGKT) lines the ATP pocket.

The protein belongs to the ATPase alpha/beta chains family. F-type ATPases have 2 components, CF(1) - the catalytic core - and CF(0) - the membrane proton channel. CF(1) has five subunits: alpha(3), beta(3), gamma(1), delta(1), epsilon(1). CF(0) has three main subunits: a(1), b(2) and c(9-12). The alpha and beta chains form an alternating ring which encloses part of the gamma chain. CF(1) is attached to CF(0) by a central stalk formed by the gamma and epsilon chains, while a peripheral stalk is formed by the delta and b chains.

Its subcellular location is the cell inner membrane. It carries out the reaction ATP + H2O + 4 H(+)(in) = ADP + phosphate + 5 H(+)(out). Functionally, produces ATP from ADP in the presence of a proton gradient across the membrane. The alpha chain is a regulatory subunit. This is ATP synthase subunit alpha from Acidovorax ebreus (strain TPSY) (Diaphorobacter sp. (strain TPSY)).